The sequence spans 296 residues: Enoyl-CoA hydratase domain-containing protein 2, mitochondrial (296 aa).

The transit peptide at 1 to 17 directs the protein to the mitochondrion; the sequence is MLRVLPRALRLPCSWRF. An N6-acetyllysine; alternate modification is found at Lys101. Lys101 is subject to N6-succinyllysine; alternate.

This sequence belongs to the enoyl-CoA hydratase/isomerase family.

Its subcellular location is the mitochondrion. This chain is Enoyl-CoA hydratase domain-containing protein 2, mitochondrial (Echdc2), found in Mus musculus (Mouse).